The following is a 357-amino-acid chain: UDP-N-acetylglucosamine--N-acetylmuramyl-(pentapeptide) pyrophosphoryl-undecaprenol N-acetylglucosamine transferase (357 aa).

UDP-N-acetyl-alpha-D-glucosamine-binding positions include 15-17 (TGG), Asn-123, Arg-164, Ser-190, and Gln-284.

Belongs to the glycosyltransferase 28 family. MurG subfamily.

Its subcellular location is the cell inner membrane. The catalysed reaction is di-trans,octa-cis-undecaprenyl diphospho-N-acetyl-alpha-D-muramoyl-L-alanyl-D-glutamyl-meso-2,6-diaminopimeloyl-D-alanyl-D-alanine + UDP-N-acetyl-alpha-D-glucosamine = di-trans,octa-cis-undecaprenyl diphospho-[N-acetyl-alpha-D-glucosaminyl-(1-&gt;4)]-N-acetyl-alpha-D-muramoyl-L-alanyl-D-glutamyl-meso-2,6-diaminopimeloyl-D-alanyl-D-alanine + UDP + H(+). Its pathway is cell wall biogenesis; peptidoglycan biosynthesis. Functionally, cell wall formation. Catalyzes the transfer of a GlcNAc subunit on undecaprenyl-pyrophosphoryl-MurNAc-pentapeptide (lipid intermediate I) to form undecaprenyl-pyrophosphoryl-MurNAc-(pentapeptide)GlcNAc (lipid intermediate II). This Synechococcus elongatus (strain ATCC 33912 / PCC 7942 / FACHB-805) (Anacystis nidulans R2) protein is UDP-N-acetylglucosamine--N-acetylmuramyl-(pentapeptide) pyrophosphoryl-undecaprenol N-acetylglucosamine transferase.